A 658-amino-acid polypeptide reads, in one-letter code: Putative phospholipase B-like lamina ancestor (658 aa).

Positions 1–29 (MLKVVGASWQKTRIGTYILIGAGLLVIGA) are cleaved as a signal peptide. Residues asparagine 229, asparagine 465, and asparagine 486 are each glycosylated (N-linked (GlcNAc...) asparagine).

The protein belongs to the phospholipase B-like family. Expressed in neural and glial progenitors prior to, but not after, differentiation. Not expressed in late third instar disks, but is expressed uniformly by early third instar disks, in the imaginal ring of the proventriculus and in the salivary gland.

The protein localises to the secreted. In terms of biological role, putative phospholipase. Involved in the regulation of cellular plasticity in imaginal disks. This Drosophila melanogaster (Fruit fly) protein is Putative phospholipase B-like lamina ancestor (lama).